We begin with the raw amino-acid sequence, 371 residues long: Queuine tRNA-ribosyltransferase (371 aa).

Catalysis depends on Asp-89, which acts as the Proton acceptor. Substrate is bound by residues Asp-89 to Phe-93, Asp-143, Gln-185, and Gly-212. Residues Gly-243–Asp-249 form an RNA binding region. Asp-262 functions as the Nucleophile in the catalytic mechanism. Residues Thr-267–Arg-271 form an RNA binding; important for wobble base 34 recognition region. Zn(2+) is bound by residues Cys-300, Cys-302, Cys-305, and His-331.

It belongs to the queuine tRNA-ribosyltransferase family. In terms of assembly, homodimer. Within each dimer, one monomer is responsible for RNA recognition and catalysis, while the other monomer binds to the replacement base PreQ1. Requires Zn(2+) as cofactor.

The catalysed reaction is 7-aminomethyl-7-carbaguanine + guanosine(34) in tRNA = 7-aminomethyl-7-carbaguanosine(34) in tRNA + guanine. It functions in the pathway tRNA modification; tRNA-queuosine biosynthesis. Functionally, catalyzes the base-exchange of a guanine (G) residue with the queuine precursor 7-aminomethyl-7-deazaguanine (PreQ1) at position 34 (anticodon wobble position) in tRNAs with GU(N) anticodons (tRNA-Asp, -Asn, -His and -Tyr). Catalysis occurs through a double-displacement mechanism. The nucleophile active site attacks the C1' of nucleotide 34 to detach the guanine base from the RNA, forming a covalent enzyme-RNA intermediate. The proton acceptor active site deprotonates the incoming PreQ1, allowing a nucleophilic attack on the C1' of the ribose to form the product. After dissociation, two additional enzymatic reactions on the tRNA convert PreQ1 to queuine (Q), resulting in the hypermodified nucleoside queuosine (7-(((4,5-cis-dihydroxy-2-cyclopenten-1-yl)amino)methyl)-7-deazaguanosine). The chain is Queuine tRNA-ribosyltransferase from Thioalkalivibrio sulfidiphilus (strain HL-EbGR7).